The following is a 326-amino-acid chain: Porin-like protein H (326 aa).

A signal peptide spans 1 to 19; the sequence is MKKTLVALAILTAAGSANA.

Belongs to the Gram-negative porin family. In terms of assembly, oligomer.

The protein resides in the cell outer membrane. Functionally, forms pores that allow passive diffusion of small molecules across the outer membrane. The chain is Porin-like protein H (ompH) from Photobacterium profundum (strain SS9).